The sequence spans 149 residues: MVMGLGPLVLIFVLGLGVTPPTLAQDDSRYKHFLTQHYDAKPFGRNDRYCETMMKRRDLTSPCKDTNTFVHGNKGSIKDVCEDKNGKPYGKNFRISKSSFQVTTCKHVGGSPWPPCRYRATSGSRNIVIACENGLPVHFDESVFQQKAH.

An N-terminal signal peptide occupies residues 1–24 (MVMGLGPLVLIFVLGLGVTPPTLA). The residue at position 25 (Gln25) is a Pyrrolidone carboxylic acid. His37 functions as the Proton acceptor in the catalytic mechanism. Arg45 lines the tRNA pocket. Cystine bridges form between Cys50-Cys105, Cys63-Cys116, and Cys81-Cys131. The Nucleolar localization signal signature appears at 55 to 59 (KRRDL). The tRNA site is built by Cys105 and Ile127. His138 (proton donor) is an active-site residue.

The protein belongs to the pancreatic ribonuclease family. As to quaternary structure, homodimer. Interacts with RNH1; inhibiting ANG ribonuclease activity. Interacts with PCNA.

It is found in the secreted. The protein localises to the nucleus. The protein resides in the nucleolus. It localises to the cytoplasm. Its subcellular location is the stress granule. Its activity is regulated as follows. Has weak tRNA ribonuclease activity by itself due to partial autoinhibition by its C-terminus, which folds into a short alpha-helix that partially occludes the substrate-binding site. In absence of stress, the ribonuclease activity is inhibited by RNH1 in the cytoplasm. In response to stress, dissociates from RNH1 in the cytoplasm and associates with cytoplasmic ribosomes with vacant A-sites: ribosomes directly activate the tRNA ribonuclease activity of ANG by refolding the C-terminal alpha-helix. In response to stress, the angiogenic activity of ANG is inhibited by RNH1 in the nucleus. Its function is as follows. Secreted ribonuclease that can either promote or restrict cell proliferation of target cells, depending on the context. Endocytosed in target cells via its receptor PLXNB2 and translocates to the cytoplasm or nucleus. Under stress conditions, localizes to the cytoplasm and promotes the assembly of stress granules (SGs): specifically cleaves a subset of tRNAs within anticodon loops to produce tRNA-derived stress-induced fragments (tiRNAs), resulting in translation repression and inhibition of cell proliferation. tiRNas also prevent formation of apoptosome, thereby promoting cell survival. Preferentially cleaves RNAs between a pyrimidine and an adenosine residue, suggesting that it cleaves the anticodon loop of tRNA(Ala) (32-UUAGCAU-38) after positions 33 and 36. Cleaves a subset of tRNAs, including tRNA(Ala), tRNA(Glu), tRNA(Gly), tRNA(Lys), tRNA(Val), tRNA(His), tRNA(Asp) and tRNA(Sec). Under growth conditions and in differentiated cells, translocates to the nucleus and stimulates ribosomal RNA (rRNA) transcription, including that containing the initiation site sequences of 45S rRNA, thereby promoting cell growth and proliferation. Angiogenin induces vascularization of normal and malignant tissues via its ability to promote rRNA transcription. Involved in hematopoietic stem and progenitor cell (HSPC) growth and survival by promoting rRNA transcription in growth conditions and inhibiting translation in response to stress, respectively. Mediates the crosstalk between myeloid and intestinal epithelial cells to protect the intestinal epithelial barrier integrity: secreted by myeloid cells and promotes intestinal epithelial cells proliferation and survival. Also mediates osteoclast-endothelial cell crosstalk in growing bone: produced by osteoclasts and protects the neighboring vascular cells against senescence by promoting rRNA transcription. This chain is Angiogenin (ANG), found in Oryctolagus cuniculus (Rabbit).